A 311-amino-acid chain; its full sequence is T-cell acute lymphocytic leukemia protein 1 homolog (311 aa).

A compositionally biased stretch (pro residues) spans 1-14 (MTMDRPPAPPPPSS). The disordered stretch occupies residues 1–67 (MTMDRPPAPP…RPSPGPPAAA (67 aa)). Basic and acidic residues predominate over residues 15-25 (DPRDARRHDPE). Residues 179–231 (VRRIFTNSRERWRQQNVNGAFAELRKLIPTHPPDKKLSKNEILRLAMKYINFL) form the bHLH domain. Residues 265-311 (SPNSSCGSSLDGAASPDSFTEEHDTLDSKHARNLHHAILPVEGSAQR) form a disordered region. The segment covering 284-294 (TEEHDTLDSKH) has biased composition (basic and acidic residues).

Efficient DNA binding requires dimerization with another bHLH protein. Forms heterodimers with TCF3. Phosphorylated on serine residues.

It is found in the nucleus. Its function is as follows. Implicated in the genesis of hemopoietic malignancies. It may play an important role in hemopoietic differentiation. The chain is T-cell acute lymphocytic leukemia protein 1 homolog (TAL1) from Gallus gallus (Chicken).